A 232-amino-acid chain; its full sequence is tRNA (guanine-N(1)-)-methyltransferase (232 aa).

Residues glycine 114 and 134-139 (IGDYIL) each bind S-adenosyl-L-methionine.

This sequence belongs to the RNA methyltransferase TrmD family. Homodimer.

It is found in the cytoplasm. It carries out the reaction guanosine(37) in tRNA + S-adenosyl-L-methionine = N(1)-methylguanosine(37) in tRNA + S-adenosyl-L-homocysteine + H(+). In terms of biological role, specifically methylates guanosine-37 in various tRNAs. The protein is tRNA (guanine-N(1)-)-methyltransferase of Wolbachia pipientis subsp. Culex pipiens (strain wPip).